The primary structure comprises 154 residues: Pro-corazonin (154 aa).

The signal sequence occupies residues 1 to 19; it reads MLRLLLLPLFLFTLSMCMG. Gln20 carries the pyrrolidone carboxylic acid modification. The residue at position 30 (Asn30) is an Asparagine amide. Positions 70-154 are excised as a propeptide; it reads LERCLSQLQR…SAEPNVFGKH (85 aa).

The protein belongs to the corazonin family. Expression is restricted to 24 neurons in the larval CNS (8 in the brain and 16 in the ventral nerve cord) and 12-16 neurons in the pars lateralis of the adult brain.

The protein localises to the secreted. Functionally, cardioactive peptide. Corazonin is probably involved in the physiological regulation of the heart beat. Clock (Clk) and cycle (cyc) proteins negatively regulate Crz transcription in a cell-specific manner. The chain is Pro-corazonin (Crz) from Drosophila simulans (Fruit fly).